The primary structure comprises 177 residues: B-phycoerythrin beta chain (177 aa).

2 residues coordinate (2R,3E)-phycoerythrobilin: C50 and C61. Position 72 is an N4-methylasparagine (N72). The (2R,3E)-phycoerythrobilin site is built by C82 and C158.

It belongs to the phycobiliprotein family. Heterotetramer of one alpha-1, one alpha-2, and two beta chains. Post-translationally, contains three covalently linked bilin chromophores.

The protein resides in the plastid. Its subcellular location is the chloroplast thylakoid membrane. Functionally, light-harvesting photosynthetic bile pigment-protein from the phycobiliprotein complex. The chain is B-phycoerythrin beta chain (cpeB) from Guillardia theta (Cryptophyte).